A 199-amino-acid chain; its full sequence is GTP cyclohydrolase-2 (199 aa).

GTP is bound at residue 49–53 (RIHSE). Residues C54, C65, and C67 each coordinate Zn(2+). GTP contacts are provided by residues Q70, 92 to 94 (EGR), and T114. D126 serves as the catalytic Proton acceptor. R128 serves as the catalytic Nucleophile. Residues T149 and K154 each contribute to the GTP site.

The protein belongs to the GTP cyclohydrolase II family. As to quaternary structure, homodimer. Zn(2+) serves as cofactor.

It catalyses the reaction GTP + 4 H2O = 2,5-diamino-6-hydroxy-4-(5-phosphoribosylamino)-pyrimidine + formate + 2 phosphate + 3 H(+). It participates in cofactor biosynthesis; riboflavin biosynthesis; 5-amino-6-(D-ribitylamino)uracil from GTP: step 1/4. Catalyzes the conversion of GTP to 2,5-diamino-6-ribosylamino-4(3H)-pyrimidinone 5'-phosphate (DARP), formate and pyrophosphate. In Blochmanniella pennsylvanica (strain BPEN), this protein is GTP cyclohydrolase-2.